Reading from the N-terminus, the 314-residue chain is tRNA pseudouridine synthase B (314 aa).

His43 serves as a coordination point for substrate. The active-site Nucleophile is Asp48. Positions 76, 179, and 200 each coordinate substrate.

It belongs to the pseudouridine synthase TruB family. Type 1 subfamily.

It carries out the reaction uridine(55) in tRNA = pseudouridine(55) in tRNA. Its function is as follows. Responsible for synthesis of pseudouridine from uracil-55 in the psi GC loop of transfer RNAs. The sequence is that of tRNA pseudouridine synthase B from Escherichia coli O157:H7.